The following is a 197-amino-acid chain: Histidine biosynthesis bifunctional protein HisIE (197 aa).

Residues 1 to 108 form a phosphoribosyl-AMP cyclohydrolase region; sequence MMTLYPVVVQ…RFEETGSPTF (108 aa). Residues 109–197 form a phosphoribosyl-ATP pyrophosphohydrolase region; sequence WLELYRLVRK…VMRELEKRRK (89 aa).

The protein in the N-terminal section; belongs to the PRA-CH family. In the C-terminal section; belongs to the PRA-PH family.

It localises to the cytoplasm. The catalysed reaction is 1-(5-phospho-beta-D-ribosyl)-ATP + H2O = 1-(5-phospho-beta-D-ribosyl)-5'-AMP + diphosphate + H(+). The enzyme catalyses 1-(5-phospho-beta-D-ribosyl)-5'-AMP + H2O = 1-(5-phospho-beta-D-ribosyl)-5-[(5-phospho-beta-D-ribosylamino)methylideneamino]imidazole-4-carboxamide. Its pathway is amino-acid biosynthesis; L-histidine biosynthesis; L-histidine from 5-phospho-alpha-D-ribose 1-diphosphate: step 2/9. It participates in amino-acid biosynthesis; L-histidine biosynthesis; L-histidine from 5-phospho-alpha-D-ribose 1-diphosphate: step 3/9. The protein is Histidine biosynthesis bifunctional protein HisIE (hisI) of Thermotoga maritima (strain ATCC 43589 / DSM 3109 / JCM 10099 / NBRC 100826 / MSB8).